A 109-amino-acid chain; its full sequence is Large ribosomal subunit protein bL19 (109 aa).

Belongs to the bacterial ribosomal protein bL19 family.

This protein is located at the 30S-50S ribosomal subunit interface and may play a role in the structure and function of the aminoacyl-tRNA binding site. The sequence is that of Large ribosomal subunit protein bL19 from Rubrobacter xylanophilus (strain DSM 9941 / JCM 11954 / NBRC 16129 / PRD-1).